A 116-amino-acid polypeptide reads, in one-letter code: MRVKTGIIRRKRHKRVLKAAKGFRGASGDAFKQAKQATRRAMAFATRDRKVNKRRMRQLWITRINSAARMNGVSYSVLMNGLKKAGILLDRKVLADIALNNATEFTKLVEAAKSAL.

The protein belongs to the bacterial ribosomal protein bL20 family.

In terms of biological role, binds directly to 23S ribosomal RNA and is necessary for the in vitro assembly process of the 50S ribosomal subunit. It is not involved in the protein synthesizing functions of that subunit. The sequence is that of Large ribosomal subunit protein bL20 from Fusobacterium nucleatum subsp. nucleatum (strain ATCC 25586 / DSM 15643 / BCRC 10681 / CIP 101130 / JCM 8532 / KCTC 2640 / LMG 13131 / VPI 4355).